We begin with the raw amino-acid sequence, 104 residues long: uncharacterized protein (104 aa).

This is an uncharacterized protein from Homo sapiens (Human).